A 229-amino-acid polypeptide reads, in one-letter code: Large ribosomal subunit protein uL1 (229 aa).

In terms of assembly, part of the 50S ribosomal subunit.

Its function is as follows. Directly binds to 23S rRNA. Forms what is known as the L1 stalk, which protrudes beyond the 70S ribosome surface. The stalk is preferentially stabilized in 70S versus 50S crystals. Interacts with the E site tRNA, blocking the exit path. This blockage implies that this section of the ribosome must be able to move to release the deacetylated tRNA. In terms of biological role, protein L1 is also a translational repressor protein, it controls the translation of the L11 operon by binding to its mRNA. The protein is Large ribosomal subunit protein uL1 (rplA) of Thermus thermophilus (strain ATCC 27634 / DSM 579 / HB8).